The chain runs to 1049 residues: Dyslexia-associated protein KIAA0319-like protein (1049 aa).

The Cytoplasmic portion of the chain corresponds to 1-29 (MEKRLGVKPNPASWILSGYYWQTSAKWLR). The chain crosses the membrane as a helical span at residues 30–50 (TLYLFYTCFCFSVLWLSTDAS). In terms of domain architecture, MANSC spans 49–127 (ASESRCQQGK…AFRTHSSNSM (79 aa)). Over 51–932 (ESRCQQGKTQ…ESNCEWSVLY (882 aa)) the chain is Extracellular. Residues 234 to 277 (TTDLTAELPGGPKNVSAQPEIPEGLATTPSTQQVKSSEKTQIAV) form a disordered region. Residues asparagine 247, asparagine 395, and asparagine 487 are each glycosylated (N-linked (GlcNAc...) asparagine). PKD domains lie at 310–401 (VVSA…VKPE), 409–498 (IAIV…VNKA), 504–594 (VANA…VQPE), 600–688 (QADA…VKEE), and 694–785 (IAKI…VKPD). Residues 933–953 (VIIATFVIVVALGILSWTVIC) traverse the membrane as a helical segment. Topologically, residues 954–1049 (CCKRQKGKPK…KARSPREEIL (96 aa)) are cytoplasmic. Threonine 974 is modified (phosphothreonine). Phosphoserine is present on residues serine 978, serine 1009, and serine 1031. The tract at residues 1022-1049 (GKLLHGQNGSVPNGQTPLKARSPREEIL) is disordered. Positions 1028–1037 (QNGSVPNGQT) are enriched in polar residues. Threonine 1037 carries the phosphothreonine modification.

Interacts with RTN4R. N-glycosylated.

It is found in the cytoplasmic granule membrane. It localises to the golgi apparatus membrane. Its subcellular location is the golgi apparatus. The protein resides in the trans-Golgi network membrane. The protein localises to the cell membrane. Functionally, possible role in axon guidance through interaction with RTN4R. The chain is Dyslexia-associated protein KIAA0319-like protein from Pongo abelii (Sumatran orangutan).